The chain runs to 48 residues: Large ribosomal subunit protein bL32 (48 aa).

The protein belongs to the bacterial ribosomal protein bL32 family.

This chain is Large ribosomal subunit protein bL32, found in Helicobacter pylori (strain P12).